The primary structure comprises 456 residues: tRNA modification GTPase MnmE (456 aa).

The (6S)-5-formyl-5,6,7,8-tetrahydrofolate site is built by Arg21, Glu85, and Lys124. Positions 220–379 constitute a TrmE-type G domain; sequence QLRIVLYGEP…LLDEIQKKAA (160 aa). Asn230 contacts K(+). GTP contacts are provided by residues 230 to 235, 249 to 255, and 274 to 277; these read NTGKSS, SEIPGTT, and DTAG. Ser234 contributes to the Mg(2+) binding site. 3 residues coordinate K(+): Ser249, Ile251, and Thr254. Mg(2+) is bound at residue Thr255. Lys456 is a binding site for (6S)-5-formyl-5,6,7,8-tetrahydrofolate.

This sequence belongs to the TRAFAC class TrmE-Era-EngA-EngB-Septin-like GTPase superfamily. TrmE GTPase family. As to quaternary structure, homodimer. Heterotetramer of two MnmE and two MnmG subunits. K(+) is required as a cofactor.

It localises to the cytoplasm. Its function is as follows. Exhibits a very high intrinsic GTPase hydrolysis rate. Involved in the addition of a carboxymethylaminomethyl (cmnm) group at the wobble position (U34) of certain tRNAs, forming tRNA-cmnm(5)s(2)U34. The sequence is that of tRNA modification GTPase MnmE from Leptospira borgpetersenii serovar Hardjo-bovis (strain JB197).